Consider the following 388-residue polypeptide: L-lactate dehydrogenase (388 aa).

Residues 1-380 (MIISSSSDYR…SRDSLVREIE (380 aa)) form the FMN hydroxy acid dehydrogenase domain. Residue Tyr24 participates in substrate binding. Positions 106 and 127 each coordinate FMN. Substrate is bound at residue Tyr129. Thr155 lines the FMN pocket. Arg164 lines the substrate pocket. Lys251 serves as a coordination point for FMN. His275 serves as the catalytic Proton acceptor. Position 278 (Arg278) interacts with substrate. Residue 306-330 (DSGIRSGLDVVRMLAQGADGVLLGR) coordinates FMN.

Belongs to the FMN-dependent alpha-hydroxy acid dehydrogenase family. It depends on FMN as a cofactor.

Its subcellular location is the cell inner membrane. The catalysed reaction is (S)-lactate + A = pyruvate + AH2. Its function is as follows. Catalyzes the conversion of L-lactate to pyruvate. Is coupled to the respiratory chain. In Xanthobacter autotrophicus (strain ATCC BAA-1158 / Py2), this protein is L-lactate dehydrogenase.